The chain runs to 330 residues: tRNA pseudouridine synthase B (330 aa).

The active-site Nucleophile is D42.

It belongs to the pseudouridine synthase TruB family. Type 1 subfamily.

The catalysed reaction is uridine(55) in tRNA = pseudouridine(55) in tRNA. Its function is as follows. Responsible for synthesis of pseudouridine from uracil-55 in the psi GC loop of transfer RNAs. This is tRNA pseudouridine synthase B from Lactococcus lactis subsp. cremoris (strain MG1363).